Reading from the N-terminus, the 444-residue chain is Glutamyl-tRNA reductase (444 aa).

Residues 41 to 44, Ser102, 107 to 109, and Gln113 each bind substrate; these read TCNR and ERE. The Nucleophile role is filled by Cys42. NADP(+) is bound at residue 181-186; it reads GTGSYA.

It belongs to the glutamyl-tRNA reductase family. As to quaternary structure, homodimer.

It carries out the reaction (S)-4-amino-5-oxopentanoate + tRNA(Glu) + NADP(+) = L-glutamyl-tRNA(Glu) + NADPH + H(+). The protein operates within porphyrin-containing compound metabolism; protoporphyrin-IX biosynthesis; 5-aminolevulinate from L-glutamyl-tRNA(Glu): step 1/2. In terms of biological role, catalyzes the NADPH-dependent reduction of glutamyl-tRNA(Glu) to glutamate 1-semialdehyde (GSA). This chain is Glutamyl-tRNA reductase, found in Cutibacterium acnes (strain DSM 16379 / KPA171202) (Propionibacterium acnes).